Reading from the N-terminus, the 161-residue chain is Dihydrofolate reductase (161 aa).

The DHFR domain occupies 2 to 161 (KISLISAISN…YNFCFEILSR (160 aa)). 6-8 (ISA) contacts substrate. Residues 7-8 (SA) and 15-20 (IGHNNK) contribute to the NADP(+) site. D28 lines the substrate pocket. 44 to 47 (GRLT) lines the NADP(+) pocket. Position 59 (R59) interacts with substrate. Residues 64–66 (ISH) and 96–101 (IGGSKI) contribute to the NADP(+) site. T115 lines the substrate pocket.

The protein belongs to the dihydrofolate reductase family.

The enzyme catalyses (6S)-5,6,7,8-tetrahydrofolate + NADP(+) = 7,8-dihydrofolate + NADPH + H(+). It functions in the pathway cofactor biosynthesis; tetrahydrofolate biosynthesis; 5,6,7,8-tetrahydrofolate from 7,8-dihydrofolate: step 1/1. Functionally, key enzyme in folate metabolism. Catalyzes an essential reaction for de novo glycine and purine synthesis, and for DNA precursor synthesis. This is Dihydrofolate reductase (folA) from Buchnera aphidicola subsp. Schizaphis graminum (strain Sg).